A 68-amino-acid polypeptide reads, in one-letter code: Large ribosomal subunit protein uL29 (68 aa).

Belongs to the universal ribosomal protein uL29 family.

In Acidiphilium cryptum (strain JF-5), this protein is Large ribosomal subunit protein uL29.